Here is a 169-residue protein sequence, read N- to C-terminus: Neudesin (169 aa).

Residues 1-28 (MAGPAPGRRLVALALIVALAVGLPTAGA) form the signal peptide. Residues 41–126 (VRLFTEEELA…EELESLDDVF (86 aa)) form the Cytochrome b5 heme-binding domain. Lys133 carries the N6-acetyllysine modification. Residues 148-169 (DGSPNLDFKPEDQPHFDIKDEF) are disordered. A compositionally biased stretch (basic and acidic residues) spans 155–169 (FKPEDQPHFDIKDEF).

The protein belongs to the cytochrome b5 family. MAPR subfamily. Interacts with PINK1 and PARK7.

It is found in the secreted. The protein localises to the extracellular space. The protein resides in the mitochondrion. It localises to the endoplasmic reticulum. Functionally, acts as a neurotrophic factor in postnatal mature neurons enhancing neuronal survival. Promotes cell proliferation and neurogenesis in undifferentiated neural progenitor cells at the embryonic stage and inhibits differentiation of astrocytes. Its neurotrophic activity is exerted via MAPK1/ERK2, MAPK3/ERK1 and AKT1/AKT pathways. Neurotrophic activity is enhanced by binding to heme. Also acts as an anorexigenic neurotrophic factor that contributes to energy balance. This Bos taurus (Bovine) protein is Neudesin (NENF).